A 211-amino-acid polypeptide reads, in one-letter code: Transcriptional regulator NarO (211 aa).

An HTH bat-type domain is found at 154 to 205 (LTARQREVLETAHEMGYFEHPREANATEVAAALDINRSTFTEHLSAAQSKLL).

In terms of biological role, activates transcription of the denitrifying genes (nitrate reductase narA and nitrite reductase nirK) under anaerobic conditions. The chain is Transcriptional regulator NarO from Haloferax volcanii (strain ATCC 29605 / DSM 3757 / JCM 8879 / NBRC 14742 / NCIMB 2012 / VKM B-1768 / DS2) (Halobacterium volcanii).